The sequence spans 428 residues: UPF0053 inner membrane protein YfjD (428 aa).

At 1–3 (MEH) the chain is on the cytoplasmic side. In terms of domain architecture, CNNM transmembrane spans 2–192 (EHISTTTLII…SQISRRNQDM (191 aa)). The chain crosses the membrane as a helical span at residues 4–24 (ISTTTLIIILIIMVVISAYFS). The Periplasmic segment spans residues 25–64 (GSETGMMTLNRYRLRHMAKQGNRSAKRVEKLLRKPDRLIS). A helical membrane pass occupies residues 65–85 (LVLIGNNLVNILASALGTIVG). Residues 86 to 91 (MRLYGD) are Cytoplasmic-facing. A helical transmembrane segment spans residues 92–112 (AGVAIATGVLTFVVLVFAEVL). At 113 to 129 (PKTIAALYPEKVAYPSS) the chain is on the periplasmic side. The chain crosses the membrane as a helical span at residues 130-150 (FLLAPLQILMMPLVWLLNAIT). Over 151–428 (RMLMRMMGIK…VKPLRESVAE (278 aa)) the chain is Cytoplasmic. CBS domains follow at residues 208–270 (MVPR…FTKE) and 272–332 (MLRA…FTTS).

The protein belongs to the UPF0053 family.

Its subcellular location is the cell inner membrane. The sequence is that of UPF0053 inner membrane protein YfjD (yfjD) from Escherichia coli (strain K12).